The chain runs to 858 residues: Heat shock protein 105 kDa (858 aa).

At serine 2 the chain carries N-acetylserine. Position 471 is an N6-acetyllysine (lysine 471). Disordered regions lie at residues lysine 500–alanine 585 and valine 801–aspartate 858. Residues glutamate 504–methionine 515 are compositionally biased toward acidic residues. A phosphoserine mark is found at serine 509 and serine 510. Polar residues predominate over residues glutamine 533–serine 555. At serine 558 the chain carries Phosphoserine. A Phosphothreonine modification is found at threonine 562. Composition is skewed to basic and acidic residues over residues glutamate 564–alanine 585 and proline 806–arginine 815. Phosphoserine is present on serine 810. Position 816 is a phosphothreonine (threonine 816).

Belongs to the heat shock protein 70 family. Interacts with HSPA8/HSC70. Interacts with HSPA1A (via NBD) and HSPA1B (via NBD). In terms of processing, phosphorylation on Ser-509 may be important for regulation of the HSPA8/HSC70 chaperone activity.

It localises to the cytoplasm. Functionally, acts as a nucleotide-exchange factor (NEF) for chaperone proteins HSPA1A and HSPA1B, promoting the release of ADP from HSPA1A/B thereby triggering substrate release. Prevents the aggregation of denatured proteins in cells under severe stress, on which the ATP levels decrease markedly. Inhibits HSPA8/HSC70 ATPase and chaperone activities. The chain is Heat shock protein 105 kDa (Hsph1) from Rattus norvegicus (Rat).